The following is a 719-amino-acid chain: Polyribonucleotide nucleotidyltransferase (719 aa).

Mg(2+) contacts are provided by aspartate 507 and aspartate 513. Residues 573 to 633 (PKLELFSVDP…EQIKAAKDYI (61 aa)) enclose the KH domain. Residues 658 to 719 (GQEFQGIVKK…NGKISVDLCE (62 aa)) form the S1 motif domain.

This sequence belongs to the polyribonucleotide nucleotidyltransferase family. It depends on Mg(2+) as a cofactor.

Its subcellular location is the cytoplasm. The catalysed reaction is RNA(n+1) + phosphate = RNA(n) + a ribonucleoside 5'-diphosphate. Involved in mRNA degradation. Catalyzes the phosphorolysis of single-stranded polyribonucleotides processively in the 3'- to 5'-direction. The protein is Polyribonucleotide nucleotidyltransferase of Campylobacter jejuni subsp. jejuni serotype O:2 (strain ATCC 700819 / NCTC 11168).